Reading from the N-terminus, the 645-residue chain is Serine/threonine-protein kinase Nek11 (645 aa).

A Protein kinase domain is found at 29 to 287; it reads YVLQQKLGSG…AIEILKIPYL (259 aa). Residues 35 to 43 and Lys61 each bind ATP; that span reads LGSGSFGTV. Asp158 functions as the Proton acceptor in the catalytic mechanism. Ser273 is subject to Phosphoserine; by CHEK1. Residues 346-385 adopt a coiled-coil conformation; that stretch reads RLRKLQAADEKARKLKKIVEEKYEENSKRMQELRSRNFQQ. The segment at 399–445 is disordered; that stretch reads GMEEKEEQPEGRLSCSPQDEDEERWQGREEESDEPTLENLPESQPIP.

Belongs to the protein kinase superfamily. NEK Ser/Thr protein kinase family. NIMA subfamily. In terms of assembly, interacts with isoform 1 of NEK2. The cofactor is Mn(2+). It depends on Mg(2+) as a cofactor. In terms of processing, phosphorylated by NEK2. Phosphorylation at Ser-273 is important for its activation. In terms of tissue distribution, poorly expressed in cerebellum, trachea, lung, appendix, and uterus.

The protein resides in the nucleus. The protein localises to the nucleolus. The enzyme catalyses L-seryl-[protein] + ATP = O-phospho-L-seryl-[protein] + ADP + H(+). It catalyses the reaction L-threonyl-[protein] + ATP = O-phospho-L-threonyl-[protein] + ADP + H(+). Autorepressed by intramolecular binding of the C-terminus which dissociates following phosphorylation by NEK2 isoform 1 in G1/S-arrested cells. NEK2 isoform 2 is largely not present in the nucleolus, and does not appear to phosphorylate NEK11. Activated in response to DNA damage. Inhibited by zinc. Protein kinase which plays an important role in the G2/M checkpoint response to DNA damage. Controls degradation of CDC25A by directly phosphorylating it on residues whose phosphorylation is required for BTRC-mediated polyubiquitination and degradation. The protein is Serine/threonine-protein kinase Nek11 of Homo sapiens (Human).